The chain runs to 1325 residues: MSVALADEPLIDLEEDLEDGEIDDDEEDEQQSSKIQVQKKTFVGDDDVQFVGVEAKNQNDDEDVVYVGPSTDAVCLQNSNSTKSKKPRPLEDDHASSIELAIANALKKKGIEPPMPRMRSSNQDTSDQSLEGSGEGLATANPLLQSTRSSRRRKRKKEREREQKKDKEQQNRSRRDENDVSVVPGGVEDMDEYEMMNVRGGSPPPGGAAPPLSSCGQRFSGADWDMDDGSAATGAAGLGAGGGGGYNSHSSYDSYSDEETNGPGLMNQRRRTRRDNEKEHQRGVNNRKRRDRDRLEGGLAGSGSKRNRRDSGEGGGGGQEKMGGSNRVEPRKLELCKFYLMDCCAKRDKCSYMHKEFPCKYYYLGMDCYAGDDCLFYHGEPLSEQLRNVLLKHMETAPKEILGDFKRISRDIAIVQMTRRHEQLCDQLNRENTWNSIGCGLMGKRQDHQMQQQQQQLQHQQLQQQQEQQQTQQQAAADGGGCIPSLLDMVINPPLSENKRKSRWTEKMGAKAAAGAAGSSERDSTSPDAKPLPPHLDLANLSHVLSAENMAKLNKLGITNLEQMLQVPFGQLTEAGLTLVEIGEIQRKAEDAKPQTQAELESSTPPSKRETEANNSNSKSNGLIMVDYTQYLKDAHVSFSGNDPLDDDRDDDEQLIIDDGNDSTAEEDQQPKKAKAPPAATHESSTEEAPLPSVFDLPSFMNNMLGQGSSARQLLPASATSPNQENAHLPGGDQSTHKSAPIGGGTSTNVLGRILFGDKQSDPEARAAFYRDIIRNPFKAHSGDGDVDSSNENSNSNSHSLTPTPTPEPGSQSPKPEDHDQDMPELPVIAPALPPTTPSLYVRRSMYDFDPVKEQEHGRQELLTEEKEQYQRDTDMRLPFEPMKHYMPATEIDAAIFSHTPIRWQLHEVTIEESSYAQIRASALHKEQRELRDPRMRRILGLPETPDNSGPLGSVPIMGPSSFSVDNIARCATTIASPDLETAVRDSTPSSPPPSVVNLPSMSVPPPSMRVPPPNIQVEKPTVRTDPRRDPRRAVLQAPTKGASTANTTAPNASGGSKQISEIRSLLQVSNWYNNLGTNNKIMVNQQLALVFTELKKFHQLPNDAPKIFDVSFIVNNTTLQQIFAKLFIFVDDNGEVVQIPEEPNGNGAALGGGGDSGGGVGGGGGGGGVVLPNLSQPPPNLSQMLRLPPPNIRMLRMSGMMMQMGNVGPPFNQPPPRGGLMGMPPNGNGLNQGVGNLGGLGQLGINQGGGPVPNGNPFNPFGGNNGGGAGVMNNMNSMGNMGMGFNNFNNNGGRGGHFPGGGSGGNGNGNNRNQRGGNHRNRNI.

2 disordered regions span residues 1-36 and 74-326; these read MSVA…SKIQ and VCLQ…GGSN. Acidic residues predominate over residues 9-30; that stretch reads PLIDLEEDLEDGEIDDDEEDEQ. Over residues 119 to 131 the composition is skewed to polar residues; that stretch reads RSSNQDTSDQSLE. The interval 138-327 is highly charged; the sequence is ATANPLLQST…GQEKMGGSNR (190 aa). Residues 149–158 show a composition bias toward basic residues; sequence SSRRRKRKKE. A coiled-coil region spans residues 149–179; it reads SSRRRKRKKEREREQKKDKEQQNRSRRDEND. Residues 159–178 are compositionally biased toward basic and acidic residues; sequence REREQKKDKEQQNRSRRDEN. The span at 236 to 246 shows a compositional bias: gly residues; it reads AGLGAGGGGGY. Residues 276–296 adopt a coiled-coil conformation; that stretch reads NEKEHQRGVNNRKRRDRDRLE. 2 C3H1-type zinc fingers span residues 330–357 and 358–381; these read PRKL…HKEF and PCKY…HGEP. Positions 444–478 form a coiled coil; sequence KRQDHQMQQQQQQLQHQQLQQQQEQQQTQQQAAAD. Over residues 499–509 the composition is skewed to basic and acidic residues; that stretch reads KRKSRWTEKMG. 8 disordered regions span residues 499-535, 588-622, 639-695, 710-745, 780-835, 979-1058, 1143-1170, and 1295-1325; these read KRKS…LPPH, KAED…KSNG, FSGN…PSVF, SARQ…IGGG, AHSG…ALPP, DLET…GGSK, EPNG…GGGV, and RGGH…NRNI. S524 bears the Phosphoserine mark. Polar residues predominate over residues 594 to 606; the sequence is PQTQAELESSTPP. T604 is modified (phosphothreonine). The span at 644 to 668 shows a compositional bias: acidic residues; it reads PLDDDRDDDEQLIIDDGNDSTAEED. At S663 the chain carries Phosphoserine. A Phosphothreonine modification is found at T664. Positions 710 to 726 are enriched in polar residues; it reads SARQLLPASATSPNQEN. The span at 790–800 shows a compositional bias: low complexity; sequence SNENSNSNSHS. The segment covering 1003 to 1015 has biased composition (pro residues); that stretch reads SVPPPSMRVPPPN. Residues 1021–1033 are compositionally biased toward basic and acidic residues; sequence PTVRTDPRRDPRR. Over residues 1042-1056 the composition is skewed to low complexity; sequence GASTANTTAPNASGG. Gly residues-rich tracts occupy residues 1149 to 1170 and 1295 to 1309; these read AALG…GGGV and RGGH…GNGN.

Belongs to the suppressor of sable family. In terms of assembly, interacts with Wdr82.

Its subcellular location is the nucleus. It is found in the chromosome. RNA-binding protein that suppresses transcription of some RNAs. Together with Wdr82, part of a transcription termination checkpoint that promotes transcription termination of RNAs and their subsequent degradation by the nuclear exosome. Promotes transcription termination of aberrant RNAs, transcripts from genes containing a transposon inserted at their very 5' end or RNAs from heat-shock-inducible repetitive element. Binds RNA preferentially at a sequence that resembles a cryptic 5'-splice site. This Drosophila melanogaster (Fruit fly) protein is Protein suppressor of sable.